A 354-amino-acid polypeptide reads, in one-letter code: NADPH dehydrogenase (354 aa).

FMN contacts are provided by Ser-23, Pro-24, Cys-26, Ala-58, and Gln-100. The active-site Proton donor is the Tyr-182. Residues Arg-230, Leu-301, Gly-323, and Arg-324 each coordinate FMN.

This sequence belongs to the NADH:flavin oxidoreductase/NADH oxidase family. NamA subfamily. In terms of assembly, homodimer. Behaves as an active monomer in solution while in the crystal packing assembles following the classical dimeric architecture of other thermophilic-like ene-reductases. Requires FMN as cofactor.

It carries out the reaction A + NADPH + H(+) = AH2 + NADP(+). Functionally, ene-reductase that catalyzes the stereoselective reduction of activated C-C double bonds. Shows very good activity with 4-ketoisophorone, 2-cyclohexen-1-one and 1-octen-3-one, and low activity with maleimide, 2-methyl-pentenal, 2-methyl-cyclohexen-1-one, 2-cyclopenten-1-one and trans-2-hexen-1-al. Shows the highest catalytic efficiency with ketoisophorone. Exhibits a restricted substrate spectrum with generally lower activities compared to other ene-reductases. The chain is NADPH dehydrogenase from Chloroflexus aggregans (strain MD-66 / DSM 9485).